The chain runs to 78 residues: Beta-defensin 29 (78 aa).

The signal sequence occupies residues Met-1–Gly-23. Disulfide bonds link Cys-40-Cys-67, Cys-47-Cys-61, and Cys-51-Cys-68.

This sequence belongs to the beta-defensin family.

The protein resides in the secreted. In terms of biological role, has antibacterial activity. This Rattus norvegicus (Rat) protein is Beta-defensin 29 (Defb29).